A 324-amino-acid chain; its full sequence is Nidogen-1 (324 aa).

Residues 16–178 (PFLADLDTTD…GVWVFEIGSP (163 aa)) enclose the NIDO domain. Asn97 carries N-linked (GlcNAc...) asparagine glycosylation. Sulfotyrosine occurs at positions 200 and 205. The tract at residues 219–259 (TQPFPSHSPRRGYPDPHNVPRTLAPSYEATERPHGIPTERT) is disordered. The segment covering 247–259 (ATERPHGIPTERT) has biased composition (basic and acidic residues). The EGF-like domain occupies 295–324 (SQQTCANNRHQCSVHAECRDYATGFCCRCV). 2 cysteine pairs are disulfide-bonded: Cys299–Cys312 and Cys306–Cys321.

Interacts with FBLN1. Interacts with LGALS3BP. Interacts with PLXDC1. Interacts with SVEP1. In terms of processing, N- and O-glycosylated.

The protein localises to the secreted. It localises to the extracellular space. It is found in the extracellular matrix. The protein resides in the basement membrane. Sulfated glycoprotein widely distributed in basement membranes and tightly associated with laminin. Also binds to collagen IV and perlecan. It probably has a role in cell-extracellular matrix interactions. This chain is Nidogen-1 (Nid1), found in Rattus norvegicus (Rat).